We begin with the raw amino-acid sequence, 231 residues long: Protein FMP52, mitochondrial (231 aa).

A mitochondrion-targeting transit peptide spans 1 to 44; it reads MNGLVLGATGLCGGGFLRHAQEAPQFSKVYAILRRELPFPATDK.

It belongs to the FMP52 family.

The protein resides in the mitochondrion outer membrane. This chain is Protein FMP52, mitochondrial (FMP52), found in Saccharomyces cerevisiae (strain ATCC 204508 / S288c) (Baker's yeast).